The primary structure comprises 227 residues: 7-cyano-7-deazaguanine synthase (227 aa).

ATP is bound at residue 8–18 (LSGGTDSATVL). Zn(2+)-binding residues include cysteine 192, cysteine 202, cysteine 205, and cysteine 208.

The protein belongs to the QueC family. Requires Zn(2+) as cofactor.

It catalyses the reaction 7-carboxy-7-deazaguanine + NH4(+) + ATP = 7-cyano-7-deazaguanine + ADP + phosphate + H2O + H(+). Its pathway is purine metabolism; 7-cyano-7-deazaguanine biosynthesis. Functionally, catalyzes the ATP-dependent conversion of 7-carboxy-7-deazaguanine (CDG) to 7-cyano-7-deazaguanine (preQ(0)). The protein is 7-cyano-7-deazaguanine synthase of Rickettsia prowazekii (strain Madrid E).